Reading from the N-terminus, the 187-residue chain is MNLDDKSLFLDAMEDVQPLKRATDVHWHPTRNQRAPQRIDTLQLDNFLTTGFLDIIPLSQPLEFRREGLQHGVLDKLRSGKYPQQASLNLLRQPVEECRKMVFSFIQQALADGLRNVLIIHGKGRDDKSHANIVRSYVARWLTEFDDVQAYCTALPHHGGSGACYVALRKTAQAKQENWERHAKRSR.

One can recognise a Smr domain in the interval 88–169 (LNLLRQPVEE…GSGACYVALR (82 aa)).

Its function is as follows. Has DNA endonuclease activity. Binds DNA. This is Probable DNA endonuclease SmrA (smrA) from Escherichia coli (strain K12).